The chain runs to 526 residues: Peptide chain release factor 3 (526 aa).

The region spanning 9 to 277 (ERRRTFAIIS…AFAEYAPPPQ (269 aa)) is the tr-type G domain. GTP-binding positions include 18–25 (SHPDAGKT), 86–90 (DTPGH), and 140–143 (NKLD).

The protein belongs to the TRAFAC class translation factor GTPase superfamily. Classic translation factor GTPase family. PrfC subfamily.

The protein localises to the cytoplasm. Its function is as follows. Increases the formation of ribosomal termination complexes and stimulates activities of RF-1 and RF-2. It binds guanine nucleotides and has strong preference for UGA stop codons. It may interact directly with the ribosome. The stimulation of RF-1 and RF-2 is significantly reduced by GTP and GDP, but not by GMP. This Methylococcus capsulatus (strain ATCC 33009 / NCIMB 11132 / Bath) protein is Peptide chain release factor 3.